We begin with the raw amino-acid sequence, 191 residues long: CASP-like protein 2U3 (191 aa).

Residues 1 to 25 (MGAYDGAEAPRAAPASTAANSRPSR) are Cytoplasmic-facing. The chain crosses the membrane as a helical span at residues 26 to 46 (LLLLHSLLLRLVAVVVSILVI). The Extracellular segment spans residues 47–68 (AVMVHAKQRVMIFKAEWDNSKA). A helical membrane pass occupies residues 69–89 (FVALVAISAICLGYSFLQFIL). At 90 to 114 (SAFHLCSKSWKSPTKCWAWMNFIAD) the chain is on the cytoplasmic side. The chain crosses the membrane as a helical span at residues 115 to 135 (QILTYAMLGAAAAAAELAYIA). The Extracellular segment spans residues 136–157 (KNGSSRAQWQPICSTFNTFCTR). Residue Asn-137 is glycosylated (N-linked (GlcNAc...) asparagine). Residues 158 to 178 (AGASIILSFIAVLALANSSAI) form a helical membrane-spanning segment. Over 179–191 (SAYHLFRRPSSSV) the chain is Cytoplasmic.

It belongs to the Casparian strip membrane proteins (CASP) family. Homodimer and heterodimers.

Its subcellular location is the cell membrane. This is CASP-like protein 2U3 from Selaginella moellendorffii (Spikemoss).